The sequence spans 182 residues: Lipoprotein signal peptidase (182 aa).

The next 3 membrane-spanning stretches (helical) occupy residues 21–41, 74–94, and 98–118; these read LLLSVAATVLALDIVTKVLAV, GYTWVLTLIATGVVVGIFWMG, and VSPWWAVGLGMILGGAMGNLV. Active-site residues include D134 and D148. Residues 146-166 form a helical membrane-spanning segment; that stretch reads VADPSVVGGAILLVVLSIFGY.

The protein belongs to the peptidase A8 family.

The protein resides in the cell membrane. It carries out the reaction Release of signal peptides from bacterial membrane prolipoproteins. Hydrolyzes -Xaa-Yaa-Zaa-|-(S,diacylglyceryl)Cys-, in which Xaa is hydrophobic (preferably Leu), and Yaa (Ala or Ser) and Zaa (Gly or Ala) have small, neutral side chains.. It participates in protein modification; lipoprotein biosynthesis (signal peptide cleavage). Its function is as follows. This protein specifically catalyzes the removal of signal peptides from prolipoproteins. The polypeptide is Lipoprotein signal peptidase (Mycobacterium avium (strain 104)).